Here is a 738-residue protein sequence, read N- to C-terminus: Catalase-peroxidase (738 aa).

Residues 1-16 (MSENHDAIVTDAKTEE) show a composition bias toward basic and acidic residues. Residues 1–37 (MSENHDAIVTDAKTEEAGGCPVAHGRAPHPTQGGGNR) are disordered. A cross-link (tryptophyl-tyrosyl-methioninium (Trp-Tyr) (with M-257)) is located at residues 108–231 (WHSAGTYRIS…LGAVQMGLIY (124 aa)). His-109 functions as the Proton acceptor in the catalytic mechanism. A cross-link (tryptophyl-tyrosyl-methioninium (Tyr-Met) (with W-108)) is located at residues 231–257 (YVNPEGPNGNPDPIAAARDIRETFGRM). His-272 is a heme b binding site.

It belongs to the peroxidase family. Peroxidase/catalase subfamily. As to quaternary structure, homodimer or homotetramer. It depends on heme b as a cofactor. Formation of the three residue Trp-Tyr-Met cross-link is important for the catalase, but not the peroxidase activity of the enzyme.

The catalysed reaction is H2O2 + AH2 = A + 2 H2O. The enzyme catalyses 2 H2O2 = O2 + 2 H2O. Its function is as follows. Bifunctional enzyme with both catalase and broad-spectrum peroxidase activity. The protein is Catalase-peroxidase of Streptomyces ambofaciens.